The following is a 315-amino-acid chain: Porphobilinogen deaminase (315 aa).

Cys-234 is subject to S-(dipyrrolylmethanemethyl)cysteine.

This sequence belongs to the HMBS family. As to quaternary structure, monomer. It depends on dipyrromethane as a cofactor.

It catalyses the reaction 4 porphobilinogen + H2O = hydroxymethylbilane + 4 NH4(+). It participates in porphyrin-containing compound metabolism; protoporphyrin-IX biosynthesis; coproporphyrinogen-III from 5-aminolevulinate: step 2/4. Tetrapolymerization of the monopyrrole PBG into the hydroxymethylbilane pre-uroporphyrinogen in several discrete steps. The sequence is that of Porphobilinogen deaminase (hemC) from Mycobacterium leprae (strain TN).